The chain runs to 349 residues: Mannonate dehydratase (349 aa).

Belongs to the mannonate dehydratase family. Fe(2+) is required as a cofactor. It depends on Mn(2+) as a cofactor.

The catalysed reaction is D-mannonate = 2-dehydro-3-deoxy-D-gluconate + H2O. Its pathway is carbohydrate metabolism; pentose and glucuronate interconversion. Functionally, catalyzes the dehydration of D-mannonate. This is Mannonate dehydratase from Oceanobacillus iheyensis (strain DSM 14371 / CIP 107618 / JCM 11309 / KCTC 3954 / HTE831).